The chain runs to 699 residues: Dymeclin (699 aa).

Glycine 2 carries N-myristoyl glycine lipidation. Residue serine 346 is modified to Phosphoserine.

The protein belongs to the dymeclin family.

The polypeptide is Dymeclin (Drosophila melanogaster (Fruit fly)).